We begin with the raw amino-acid sequence, 418 residues long: Serine hydroxymethyltransferase (418 aa).

(6S)-5,6,7,8-tetrahydrofolate-binding positions include Leu121 and 125–127; that span reads GHL. An N6-(pyridoxal phosphate)lysine modification is found at Lys230. 355–357 contacts (6S)-5,6,7,8-tetrahydrofolate; it reads SPF.

Belongs to the SHMT family. In terms of assembly, homodimer. It depends on pyridoxal 5'-phosphate as a cofactor.

It localises to the cytoplasm. It catalyses the reaction (6R)-5,10-methylene-5,6,7,8-tetrahydrofolate + glycine + H2O = (6S)-5,6,7,8-tetrahydrofolate + L-serine. It participates in one-carbon metabolism; tetrahydrofolate interconversion. It functions in the pathway amino-acid biosynthesis; glycine biosynthesis; glycine from L-serine: step 1/1. In terms of biological role, catalyzes the reversible interconversion of serine and glycine with tetrahydrofolate (THF) serving as the one-carbon carrier. This reaction serves as the major source of one-carbon groups required for the biosynthesis of purines, thymidylate, methionine, and other important biomolecules. Also exhibits THF-independent aldolase activity toward beta-hydroxyamino acids, producing glycine and aldehydes, via a retro-aldol mechanism. The protein is Serine hydroxymethyltransferase of Streptococcus pyogenes serotype M3 (strain ATCC BAA-595 / MGAS315).